The primary structure comprises 337 residues: Phosphate acyltransferase (337 aa).

It belongs to the PlsX family. Homodimer. Probably interacts with PlsY.

Its subcellular location is the cytoplasm. The catalysed reaction is a fatty acyl-[ACP] + phosphate = an acyl phosphate + holo-[ACP]. It participates in lipid metabolism; phospholipid metabolism. In terms of biological role, catalyzes the reversible formation of acyl-phosphate (acyl-PO(4)) from acyl-[acyl-carrier-protein] (acyl-ACP). This enzyme utilizes acyl-ACP as fatty acyl donor, but not acyl-CoA. This Moritella marina (Vibrio marinus) protein is Phosphate acyltransferase.